The following is a 166-amino-acid chain: Regulatory protein RecX (166 aa).

The protein belongs to the RecX family.

The protein localises to the cytoplasm. In terms of biological role, modulates RecA activity. This chain is Regulatory protein RecX, found in Escherichia coli (strain SE11).